A 456-amino-acid chain; its full sequence is Bifunctional protein GlmU (456 aa).

Residues 1–229 form a pyrophosphorylase region; that stretch reads MSTSPLSVVI…LSEVEGVNNR (229 aa). UDP-N-acetyl-alpha-D-glucosamine contacts are provided by residues 11 to 14, Lys25, Gln76, 81 to 82, 103 to 105, Gly140, Glu154, Asn169, and Asn227; these read LAAG, GT, and YGD. Asp105 contacts Mg(2+). Residue Asn227 participates in Mg(2+) binding. The segment at 230–250 is linker; the sequence is LQLSALERAYQQQQAQRLLLA. The N-acetyltransferase stretch occupies residues 251 to 456; sequence GVMLTDPARF…SGWERPVKKK (206 aa). Positions 333 and 351 each coordinate UDP-N-acetyl-alpha-D-glucosamine. The active-site Proton acceptor is His363. Positions 366 and 377 each coordinate UDP-N-acetyl-alpha-D-glucosamine. Acetyl-CoA contacts are provided by residues Ala380, 386–387, Ser405, Ala423, and Arg440; that span reads NY.

The protein in the N-terminal section; belongs to the N-acetylglucosamine-1-phosphate uridyltransferase family. This sequence in the C-terminal section; belongs to the transferase hexapeptide repeat family. In terms of assembly, homotrimer. It depends on Mg(2+) as a cofactor.

The protein resides in the cytoplasm. The catalysed reaction is alpha-D-glucosamine 1-phosphate + acetyl-CoA = N-acetyl-alpha-D-glucosamine 1-phosphate + CoA + H(+). The enzyme catalyses N-acetyl-alpha-D-glucosamine 1-phosphate + UTP + H(+) = UDP-N-acetyl-alpha-D-glucosamine + diphosphate. It functions in the pathway nucleotide-sugar biosynthesis; UDP-N-acetyl-alpha-D-glucosamine biosynthesis; N-acetyl-alpha-D-glucosamine 1-phosphate from alpha-D-glucosamine 6-phosphate (route II): step 2/2. The protein operates within nucleotide-sugar biosynthesis; UDP-N-acetyl-alpha-D-glucosamine biosynthesis; UDP-N-acetyl-alpha-D-glucosamine from N-acetyl-alpha-D-glucosamine 1-phosphate: step 1/1. It participates in bacterial outer membrane biogenesis; LPS lipid A biosynthesis. In terms of biological role, catalyzes the last two sequential reactions in the de novo biosynthetic pathway for UDP-N-acetylglucosamine (UDP-GlcNAc). The C-terminal domain catalyzes the transfer of acetyl group from acetyl coenzyme A to glucosamine-1-phosphate (GlcN-1-P) to produce N-acetylglucosamine-1-phosphate (GlcNAc-1-P), which is converted into UDP-GlcNAc by the transfer of uridine 5-monophosphate (from uridine 5-triphosphate), a reaction catalyzed by the N-terminal domain. This chain is Bifunctional protein GlmU, found in Edwardsiella ictaluri (strain 93-146).